A 555-amino-acid polypeptide reads, in one-letter code: Urocanate hydratase (555 aa).

Residues 51 to 52 (GG), Gln129, 175 to 177 (GMG), Glu195, 262 to 266 (QTSAH), 272 to 273 (YL), and Tyr321 contribute to the NAD(+) site. Cys409 is a catalytic residue. Gly491 contributes to the NAD(+) binding site.

Belongs to the urocanase family. Requires NAD(+) as cofactor.

It is found in the cytoplasm. It carries out the reaction 4-imidazolone-5-propanoate = trans-urocanate + H2O. It functions in the pathway amino-acid degradation; L-histidine degradation into L-glutamate; N-formimidoyl-L-glutamate from L-histidine: step 2/3. Functionally, catalyzes the conversion of urocanate to 4-imidazolone-5-propionate. This is Urocanate hydratase from Xanthomonas euvesicatoria pv. vesicatoria (strain 85-10) (Xanthomonas campestris pv. vesicatoria).